A 91-amino-acid chain; its full sequence is Small ribosomal subunit protein uS19 (91 aa).

The protein belongs to the universal ribosomal protein uS19 family.

Protein S19 forms a complex with S13 that binds strongly to the 16S ribosomal RNA. The polypeptide is Small ribosomal subunit protein uS19 (Synechococcus sp. (strain RCC307)).